We begin with the raw amino-acid sequence, 62 residues long: Venom peptide 6 (62 aa).

The signal sequence occupies residues 1–26 (MKSTSVFILFAGIAIMACLQMTGTEA). AXPX repeat units lie at residues 26-29 (AAPS), 30-33 (ASPN), and 40-43 (ADPD). A propeptide spanning residues 27 to 46 (APSASPNPTPVARADPDPEA) is cleaved from the precursor.

The protein belongs to the MCD family. In terms of tissue distribution, expressed by the venom gland.

It localises to the secreted. The protein localises to the target cell membrane. Antimicrobial peptide with strong activity against the fungus B.cinerea (MIC=5 uM) and the Gram-positive bacterium S.aureus (MIC=50 uM), and no activity against C.albicans (MIC&gt;200 uM), and the Gram-negative bacterium E.coli (MIC&gt;200 uM). Shows cytolytic activity against insect cell lines. Has no hemolytic activity against human erythrocytes. In vivo, peptide injection in the vicinity of the head and thorax of lepidopteran larvae induces feeding disorder that lasts one or two days before recovering. The chain is Venom peptide 6 from Eumenes pomiformis (Potter wasp).